A 379-amino-acid polypeptide reads, in one-letter code: tRNA-specific 2-thiouridylase MnmA (379 aa).

Residues 6 to 13 and Leu-32 contribute to the ATP site; that span reads AMSGGVDS. The Nucleophile role is filled by Cys-101. Residues Cys-101 and Cys-199 are joined by a disulfide bond. Residue Gly-125 participates in ATP binding. The interaction with tRNA stretch occupies residues 148–150; the sequence is KDQ. Cys-199 (cysteine persulfide intermediate) is an active-site residue.

The protein belongs to the MnmA/TRMU family.

It is found in the cytoplasm. The catalysed reaction is S-sulfanyl-L-cysteinyl-[protein] + uridine(34) in tRNA + AH2 + ATP = 2-thiouridine(34) in tRNA + L-cysteinyl-[protein] + A + AMP + diphosphate + H(+). Catalyzes the 2-thiolation of uridine at the wobble position (U34) of tRNA, leading to the formation of s(2)U34. The sequence is that of tRNA-specific 2-thiouridylase MnmA from Arthrobacter sp. (strain FB24).